The sequence spans 162 residues: Transcription elongation factor GreA (162 aa).

A coiled-coil region spans residues 45–75 (ENAEYEAAREKQAFIEGRIKELEDMAARAEI).

Belongs to the GreA/GreB family.

Its function is as follows. Necessary for efficient RNA polymerase transcription elongation past template-encoded arresting sites. The arresting sites in DNA have the property of trapping a certain fraction of elongating RNA polymerases that pass through, resulting in locked ternary complexes. Cleavage of the nascent transcript by cleavage factors such as GreA or GreB allows the resumption of elongation from the new 3'terminus. GreA releases sequences of 2 to 3 nucleotides. In Rickettsia canadensis (strain McKiel), this protein is Transcription elongation factor GreA.